A 315-amino-acid chain; its full sequence is tRNA dimethylallyltransferase (315 aa).

Residue G10–S17 coordinates ATP. T12–S17 provides a ligand contact to substrate. Residues D35–Q38 form an interaction with substrate tRNA region.

Belongs to the IPP transferase family. As to quaternary structure, monomer. The cofactor is Mg(2+).

The catalysed reaction is adenosine(37) in tRNA + dimethylallyl diphosphate = N(6)-dimethylallyladenosine(37) in tRNA + diphosphate. In terms of biological role, catalyzes the transfer of a dimethylallyl group onto the adenine at position 37 in tRNAs that read codons beginning with uridine, leading to the formation of N6-(dimethylallyl)adenosine (i(6)A). This Thermoanaerobacter pseudethanolicus (strain ATCC 33223 / 39E) (Clostridium thermohydrosulfuricum) protein is tRNA dimethylallyltransferase.